Reading from the N-terminus, the 288-residue chain is Energy-coupling factor transporter ATP-binding protein EcfA2 (288 aa).

Residues 3-245 (IIVKNLTHIY…NASKLKDIGL (243 aa)) form the ABC transporter domain. ATP is bound at residue 40-47 (GHTGSGKS).

Belongs to the ABC transporter superfamily. Energy-coupling factor EcfA family. Forms a stable energy-coupling factor (ECF) transporter complex composed of 2 membrane-embedded substrate-binding proteins (S component), 2 ATP-binding proteins (A component) and 2 transmembrane proteins (T component).

The protein localises to the cell membrane. In terms of biological role, ATP-binding (A) component of a common energy-coupling factor (ECF) ABC-transporter complex. Unlike classic ABC transporters this ECF transporter provides the energy necessary to transport a number of different substrates. The polypeptide is Energy-coupling factor transporter ATP-binding protein EcfA2 (Clostridioides difficile (strain 630) (Peptoclostridium difficile)).